The chain runs to 95 residues: MSFVFQAEVRSDLGKGASRRLRHADQVPAIIYGAGKEAQSITVDHKKFIIAQEKPEFYESVLTLVINGEEVNVKVKAIQRHPVKPKLVHLDFVRV.

It belongs to the bacterial ribosomal protein bL25 family. In terms of assembly, part of the 50S ribosomal subunit; part of the 5S rRNA/L5/L18/L25 subcomplex. Contacts the 5S rRNA. Binds to the 5S rRNA independently of L5 and L18.

Functionally, this is one of the proteins that binds to the 5S RNA in the ribosome where it forms part of the central protuberance. The chain is Large ribosomal subunit protein bL25 from Aeromonas salmonicida (strain A449).